The chain runs to 311 residues: Bifunctional pinoresinol-lariciresinol reductase (311 aa).

Residues 10–16, Arg35, and Lys44 contribute to the NADP(+) site; that span reads GGTGYLG. The Proton acceptor role is filled by Lys138. Arg142 provides a ligand contact to NADP(+). His270 is a binding site for substrate.

Belongs to the NmrA-type oxidoreductase family. Isoflavone reductase subfamily. Dimer. As to expression, expressed in rhizomes, stems, and leaves.

The enzyme catalyses (-)-secoisolariciresinol + NADP(+) = (+)-lariciresinol + NADPH + H(+). It carries out the reaction (+)-lariciresinol + NADP(+) = (+)-pinoresinol + NADPH + H(+). Its pathway is aromatic compound metabolism; phenylpropanoid biosynthesis. Functionally, reductase involved in lignan biosynthesis. Also involved in the biosynthesis of etoposide, a chemotherapeutic compound of the topoisomerase inhibitor family. Catalyzes the enantioselective sequential conversion of (+)-pinoresinol into (+)-lariciresinol and of (+)-lariciresinol into (-)-secoisolariciresinol. Abstracts the 4R-hydride from the NADPH cofactor during catalysis. The sequence is that of Bifunctional pinoresinol-lariciresinol reductase from Sinopodophyllum hexandrum (Himalayan may apple).